Here is a 447-residue protein sequence, read N- to C-terminus: Na(+)-translocating NADH-quinone reductase subunit A (447 aa).

This sequence belongs to the NqrA family. Composed of six subunits; NqrA, NqrB, NqrC, NqrD, NqrE and NqrF.

It catalyses the reaction a ubiquinone + n Na(+)(in) + NADH + H(+) = a ubiquinol + n Na(+)(out) + NAD(+). NQR complex catalyzes the reduction of ubiquinone-1 to ubiquinol by two successive reactions, coupled with the transport of Na(+) ions from the cytoplasm to the periplasm. NqrA to NqrE are probably involved in the second step, the conversion of ubisemiquinone to ubiquinol. The polypeptide is Na(+)-translocating NADH-quinone reductase subunit A (Cellvibrio japonicus (strain Ueda107) (Pseudomonas fluorescens subsp. cellulosa)).